The primary structure comprises 466 residues: Probable fibrosin-1 (466 aa).

Residue Lys8 forms a Glycyl lysine isopeptide (Lys-Gly) (interchain with G-Cter in SUMO2) linkage. Asymmetric dimethylarginine occurs at positions 229 and 239. Disordered regions lie at residues 236–315 (AWVR…AAAA) and 410–466 (LLYS…RADR). The segment covering 248-272 (GSDKERPMERREPSVTKEEKDRDLP) has biased composition (basic and acidic residues). The residue at position 281 (Ser281) is a Phosphoserine. The span at 288 to 311 (RAGEEGARPAKESVRVKEERKEEA) shows a compositional bias: basic and acidic residues. Positions 442-459 (APPPLVPAPRPSSPPRAP) are enriched in pro residues.

The sequence is that of Probable fibrosin-1 (Fbrs) from Mus musculus (Mouse).